A 74-amino-acid chain; its full sequence is ATP synthase subunit c (74 aa).

The next 2 membrane-spanning stretches (helical) occupy residues 9 to 29 and 54 to 74; these read IGAG…GNIF and FALT…ILFV.

This sequence belongs to the ATPase C chain family. F-type ATPases have 2 components, F(1) - the catalytic core - and F(0) - the membrane proton channel. F(1) has five subunits: alpha(3), beta(3), gamma(1), delta(1), epsilon(1). F(0) has three main subunits: a(1), b(2) and c(10-14). The alpha and beta chains form an alternating ring which encloses part of the gamma chain. F(1) is attached to F(0) by a central stalk formed by the gamma and epsilon chains, while a peripheral stalk is formed by the delta and b chains.

The protein localises to the cell inner membrane. F(1)F(0) ATP synthase produces ATP from ADP in the presence of a proton or sodium gradient. F-type ATPases consist of two structural domains, F(1) containing the extramembraneous catalytic core and F(0) containing the membrane proton channel, linked together by a central stalk and a peripheral stalk. During catalysis, ATP synthesis in the catalytic domain of F(1) is coupled via a rotary mechanism of the central stalk subunits to proton translocation. Functionally, key component of the F(0) channel; it plays a direct role in translocation across the membrane. A homomeric c-ring of between 10-14 subunits forms the central stalk rotor element with the F(1) delta and epsilon subunits. This chain is ATP synthase subunit c, found in Gluconacetobacter diazotrophicus (strain ATCC 49037 / DSM 5601 / CCUG 37298 / CIP 103539 / LMG 7603 / PAl5).